Consider the following 180-residue polypeptide: NADH-quinone oxidoreductase subunit I (180 aa).

2 4Fe-4S ferredoxin-type domains span residues 50 to 80 (LTRD…LQKA) and 90 to 119 (EFFR…LTPD). [4Fe-4S] cluster-binding residues include cysteine 60, cysteine 63, cysteine 66, cysteine 70, cysteine 99, cysteine 102, cysteine 105, and cysteine 109.

It belongs to the complex I 23 kDa subunit family. In terms of assembly, NDH-1 is composed of 13 different subunits. Subunits NuoA, H, J, K, L, M, N constitute the membrane sector of the complex. [4Fe-4S] cluster is required as a cofactor.

Its subcellular location is the cell inner membrane. The catalysed reaction is a quinone + NADH + 5 H(+)(in) = a quinol + NAD(+) + 4 H(+)(out). In terms of biological role, NDH-1 shuttles electrons from NADH, via FMN and iron-sulfur (Fe-S) centers, to quinones in the respiratory chain. The immediate electron acceptor for the enzyme in this species is believed to be ubiquinone. Couples the redox reaction to proton translocation (for every two electrons transferred, four hydrogen ions are translocated across the cytoplasmic membrane), and thus conserves the redox energy in a proton gradient. This is NADH-quinone oxidoreductase subunit I from Shigella boydii serotype 4 (strain Sb227).